We begin with the raw amino-acid sequence, 328 residues long: Glyoxylate reductase/hydroxypyruvate reductase (328 aa).

Residue Ser36 is modified to Phosphoserine. 83–84 serves as a coordination point for substrate; the sequence is VG. NADP(+) contacts are provided by residues 162 to 164, 185 to 188, Ser217, and Ile243; these read GRI and RQPR. Substrate is bound by residues Arg245, Asp269, and 293–296; that span reads HIGS. Catalysis depends on His293, which acts as the Proton donor. Gly295 is an NADP(+) binding site. At Thr298 the chain carries Phosphothreonine.

Belongs to the D-isomer specific 2-hydroxyacid dehydrogenase family. As to quaternary structure, homodimer.

The catalysed reaction is glycolate + NADP(+) = glyoxylate + NADPH + H(+). It carries out the reaction (R)-glycerate + NAD(+) = 3-hydroxypyruvate + NADH + H(+). It catalyses the reaction (R)-glycerate + NADP(+) = 3-hydroxypyruvate + NADPH + H(+). In terms of biological role, enzyme with hydroxy-pyruvate reductase, glyoxylate reductase and D-glycerate dehydrogenase enzymatic activities. Reduces hydroxypyruvate to D-glycerate, glyoxylate to glycolate oxidizes D-glycerate to hydroxypyruvate. This Mus musculus (Mouse) protein is Glyoxylate reductase/hydroxypyruvate reductase (Grhpr).